The sequence spans 119 residues: NADH dehydrogenase [ubiquinone] 1 subunit C2 (119 aa).

A helical transmembrane segment spans residues 56–75; that stretch reads GLHRQLLYITAFFFAGYYLV.

This sequence belongs to the complex I NDUFC2 subunit family. As to quaternary structure, complex I is composed of 45 different subunits. Interacts with TMEM242.

Its subcellular location is the mitochondrion inner membrane. Its function is as follows. Accessory subunit of the mitochondrial membrane respiratory chain NADH dehydrogenase (Complex I), that is believed not to be involved in catalysis but required for the complex assembly. Complex I functions in the transfer of electrons from NADH to the respiratory chain. The immediate electron acceptor for the enzyme is believed to be ubiquinone. The polypeptide is NADH dehydrogenase [ubiquinone] 1 subunit C2 (Gorilla gorilla gorilla (Western lowland gorilla)).